A 158-amino-acid polypeptide reads, in one-letter code: Glycosyl-phosphatidylinositol-anchored molecule-like protein (158 aa).

The N-terminal stretch at 1 to 17 (MLLFALLLAMELPLVAA) is a signal peptide. One can recognise a UPAR/Ly6 domain in the interval 29 to 134 (LRCHDCAVIN…DEVTEEELPE (106 aa)). Cystine bridges form between Cys31-Cys55, Cys34-Cys42, Cys48-Cys73, Cys77-Cys104, and Cys105-Cys110.

It localises to the cell membrane. May play a role in the apoptotic pathway or cell-cycle regulation induced by p53/TP53 after DNA damage. The chain is Glycosyl-phosphatidylinositol-anchored molecule-like protein (GML) from Homo sapiens (Human).